A 229-amino-acid chain; its full sequence is Extracellular endonuclease (229 aa).

An N-terminal signal peptide occupies residues 1-19; the sequence is MSARFIAVFCLFFTVTAHA. The disordered stretch occupies residues 69-95; that stretch reads RADASNGNTSSRPGRSGISASAGKPVG. Over residues 71–81 the composition is skewed to polar residues; the sequence is DASNGNTSSRP.

This sequence belongs to the EndA/NucM nuclease family.

Its subcellular location is the secreted. The polypeptide is Extracellular endonuclease (endX) (Pseudomonas fluorescens biotype A).